Here is a 109-residue protein sequence, read N- to C-terminus: MSITDVLSADDIAAALQECQDPDTFEPQKFFQTSGLSKMSASQVKDVFRFIDNDQSGYLDEEELKFFLQKFESGARELTESETKSLMAAADNDGDGKIGADEFQEMVHS.

Position 2 is an N-acetylserine (S2). 2 EF-hand domains span residues 39–74 and 78–109; these read MSAS…FESG and LTES…MVHS. D52, D54, S56, Y58, E63, D91, D93, D95, K97, and E102 together coordinate Ca(2+).

Belongs to the parvalbumin family. In terms of tissue distribution, abundant in the organ of Corti.

Functionally, has some calmodulin-like activity with respect to enzyme activation and growth regulation. Binds two calcium ions. The sequence is that of Oncomodulin (OCM) from Cavia porcellus (Guinea pig).